Consider the following 503-residue polypeptide: MVLEMLNPMYYKITSMVSEVVPFASIAVLLLTGFLLLLWNYENTSSIPSPGYFLGIGPLISHFRFLWMGIGSACNYYNEMYGEFMRVWIGGEETLIISKSSSVFHVMKHSHYTSRFGSKPGLECIGMYEKGIIFNNDPALWKAVRTYFMKALSGPGLVRMVTVCADSITKHLDKLEEVRNDLGYVDVLTLMRRIMLDTSNNLFLGIPLDEKAIVCKIQGYFDAWQALLLKPEFFFKFSWLYKKHKESVKDLKENMEILIEKKRCSIITAEKLEDCMDFATELILAEKRGELTKENVNQCILEMLIAAPDTLSVTVFFMLFLIAKHPQVEEAIVKEIQTVIGERDIRNDDMQKLKVVENFIYESMRYQPVVDLVMRKALEDDVIDGYPVKKGTNIILNIGRMHRLEFFPKPNEFTLENFAKNVPYRYFQPFGFGPRACAGKYIAMVMMKVTLVILLRRFQVQTPQDRCVEKMQKKNDLSLHPDETSGLLEMIFIPRNSDKSLDH.

C437 contributes to the heme binding site.

The protein belongs to the cytochrome P450 family. The cofactor is heme.

Its subcellular location is the membrane. It carries out the reaction testosterone + 3 reduced [NADPH--hemoprotein reductase] + 3 O2 = 17beta-estradiol + formate + 3 oxidized [NADPH--hemoprotein reductase] + 4 H2O + 4 H(+). It catalyses the reaction androst-4-ene-3,17-dione + 3 reduced [NADPH--hemoprotein reductase] + 3 O2 = estrone + formate + 3 oxidized [NADPH--hemoprotein reductase] + 4 H2O + 4 H(+). Functionally, catalyzes the formation of aromatic C18 estrogens from C19 androgens. The polypeptide is Aromatase 2 (CYP19A2) (Sus scrofa (Pig)).